The primary structure comprises 488 residues: Pre-glycoprotein polyprotein GP complex (488 aa).

The N-myristoyl glycine; by host moiety is linked to residue glycine 2. At 2–17 (GQLFSFFEEVPNIIHE) the chain is on the extracellular side. Residues 18-32 (AINIALIAVSLIAAL) form a helical membrane-spanning segment. Position 33 (lysine 33) is a topological domain, cytoplasmic. A helical membrane pass occupies residues 34–53 (GMINLWKSGLFQLIFFLTLA). Extracellular loops occupy residues 54–58 (GRSCS) and 59–427 (FRIG…TLVD). Cysteine 57 lines the Zn(2+) pocket. Residues asparagine 69, asparagine 88, asparagine 99, asparagine 125, asparagine 171, asparagine 178, and asparagine 222 are each glycosylated (N-linked (GlcNAc...) asparagine; by host). 4 disulfide bridges follow: cysteine 85–cysteine 229, cysteine 274–cysteine 287, cysteine 296–cysteine 305, and cysteine 359–cysteine 380. Residues asparagine 360, asparagine 368, asparagine 385, and asparagine 390 are each glycosylated (N-linked (GlcNAc...) asparagine; by host). A helical membrane pass occupies residues 428–448 (ICFWSTLFFTTTLFLHLVGFP). The Cytoplasmic segment spans residues 449-488 (THRHIRGEPCPLPHRLNSRGGCRCGKYPELKKPITWHKNH). Positions 450, 452, 458, 462, 470, 472, and 488 each coordinate Zn(2+).

This sequence belongs to the arenaviridae GPC protein family. In terms of assembly, homotetramer; disulfide-linked. Homotetramer. GP2 homotetramers bind through ionic interactions with GP1 homotetramers to form the GP complex together with the stable signal peptide. The GP-C polyprotein interacts with the host protease MBTPS1/SKI-1 resulting in the polyprotein processing. In terms of processing, specific enzymatic cleavages in vivo yield mature proteins. GP-C polyprotein is cleaved in the endoplasmic reticulum by the host protease MBTPS1. Only cleaved glycoprotein is incorporated into virions. Post-translationally, the SSP remains stably associated with the GP complex following cleavage by signal peptidase and plays crucial roles in the trafficking of GP through the secretory pathway. Myristoylation is necessary for GP2-mediated fusion activity.

Its subcellular location is the virion membrane. The protein resides in the host endoplasmic reticulum membrane. The protein localises to the host Golgi apparatus membrane. It is found in the host cell membrane. In terms of biological role, interacts with the host receptor. Mediates virus attachment to host TFRC. This attachment induces virion internalization predominantly through clathrin-mediated endocytosis. Class I viral fusion protein that directs fusion of viral and host endosomal membranes, leading to delivery of the nucleocapsid into the cytoplasm. Membrane fusion is mediated by irreversible conformational changes induced upon acidification in the endosome. Functionally, stable signal peptide (SSP): cleaved and functions as a signal peptide. In addition, it is also retained as the third component of the GP complex. The SSP is required for efficient glycoprotein expression, post-translational maturation cleavage of GP1 and GP2, glycoprotein transport to the cell surface plasma membrane, formation of infectious virus particles, and acid pH-dependent glycoprotein-mediated cell fusion. The sequence is that of Pre-glycoprotein polyprotein GP complex from Homo sapiens (Human).